We begin with the raw amino-acid sequence, 505 residues long: Histidine ammonia-lyase (505 aa).

A cross-link (5-imidazolinone (Ala-Gly)) is located at residues 141-143 (ASG). Ser-142 is modified (2,3-didehydroalanine (Ser)).

Belongs to the PAL/histidase family. In terms of processing, contains an active site 4-methylidene-imidazol-5-one (MIO), which is formed autocatalytically by cyclization and dehydration of residues Ala-Ser-Gly.

It is found in the cytoplasm. The catalysed reaction is L-histidine = trans-urocanate + NH4(+). It functions in the pathway amino-acid degradation; L-histidine degradation into L-glutamate; N-formimidoyl-L-glutamate from L-histidine: step 1/3. The polypeptide is Histidine ammonia-lyase (Bacillus cereus (strain ATCC 10987 / NRS 248)).